The following is a 187-amino-acid chain: NADH-quinone oxidoreductase subunit B (187 aa).

Residues 1–10 (MTADHNRALH) show a composition bias toward basic and acidic residues. The disordered stretch occupies residues 1 to 22 (MTADHNRALHDAPTARGGEVRQ). [4Fe-4S] cluster contacts are provided by C66, C67, C131, and C161.

It belongs to the complex I 20 kDa subunit family. As to quaternary structure, NDH-1 is composed of 14 different subunits. Subunits NuoB, C, D, E, F, and G constitute the peripheral sector of the complex. [4Fe-4S] cluster is required as a cofactor.

The protein resides in the cell inner membrane. The enzyme catalyses a quinone + NADH + 5 H(+)(in) = a quinol + NAD(+) + 4 H(+)(out). In terms of biological role, NDH-1 shuttles electrons from NADH, via FMN and iron-sulfur (Fe-S) centers, to quinones in the respiratory chain. Couples the redox reaction to proton translocation (for every two electrons transferred, four hydrogen ions are translocated across the cytoplasmic membrane), and thus conserves the redox energy in a proton gradient. This is NADH-quinone oxidoreductase subunit B from Erythrobacter litoralis (strain HTCC2594).